The primary structure comprises 106 residues: Large ribosomal subunit protein eL30 (106 aa).

Belongs to the eukaryotic ribosomal protein eL30 family.

The sequence is that of Large ribosomal subunit protein eL30 from Methanococcus maripaludis (strain C5 / ATCC BAA-1333).